Here is a 100-residue protein sequence, read N- to C-terminus: uncharacterized protein (100 aa).

This is an uncharacterized protein from Rickettsia prowazekii (strain Madrid E).